We begin with the raw amino-acid sequence, 274 residues long: MTHIEIRHAMDPVSARQLDTAGLREAFHMADLFHEGEIRLVYTHYDRMIVGGAVPAGAPLVLDEVKPTGTASILDRREMGVVNIGGPGTVSAAGETWEMGRGDVLYLPMGAGPVTFAGQGRFYILSAPAHTAHPARLVTLADAKKVKMGAPETANERTINQFIHPEVMPSCQLVVGYTQFHGGSVWNTMPAHVHDRRMEVYLYFDLAQHARVFHFMGEPSETRHLVMKNEEAVVSPPWSIHCGCGTGAYTFIWAMAGDNVDYRDVEPVAMEDLR.

Histidine 192, histidine 194, glutamate 199, and histidine 241 together coordinate Zn(2+).

Belongs to the KduI family. The cofactor is Zn(2+).

It carries out the reaction 5-dehydro-4-deoxy-D-glucuronate = 3-deoxy-D-glycero-2,5-hexodiulosonate. The protein operates within glycan metabolism; pectin degradation; 2-dehydro-3-deoxy-D-gluconate from pectin: step 4/5. Catalyzes the isomerization of 5-dehydro-4-deoxy-D-glucuronate to 3-deoxy-D-glycero-2,5-hexodiulosonate. The polypeptide is 4-deoxy-L-threo-5-hexosulose-uronate ketol-isomerase (Cereibacter sphaeroides (strain ATCC 17025 / ATH 2.4.3) (Rhodobacter sphaeroides)).